Consider the following 231-residue polypeptide: Somatolactin-2 (231 aa).

An N-terminal signal peptide occupies residues 1-24; sequence MRMMRAIKQGQWAILLWPYLLTTS. 3 disulfide bridges follow: cysteine 29–cysteine 39, cysteine 89–cysteine 205, and cysteine 222–cysteine 230. An N-linked (GlcNAc...) asparagine glycan is attached at asparagine 145.

This sequence belongs to the somatotropin/prolactin family. As to expression, pituitary gland.

It localises to the secreted. The protein is Somatolactin-2 of Sparus aurata (Gilthead sea bream).